The chain runs to 962 residues: Rho GTPase-activating protein syd-1 (962 aa).

Disordered regions lie at residues 231–367 (GKKS…MRSD), 397–419 (PRTL…RIMT), and 437–471 (CGEE…NGSP). Composition is skewed to polar residues over residues 243-261 (NATT…SSPR), 323-345 (SFNS…SSTA), 401-412 (RQPNDSNKSNSL), and 453-471 (PPFS…NGSP). The region spanning 572-696 (RAAGPGINVD…NDDRVFALNL (125 aa)) is the C2 domain. Residues 729–923 (VPLGRLVQRE…LDMNQASSSL (195 aa)) enclose the Rho-GAP domain. The segment covering 934 to 947 (VNSESGSDSPATSG) has biased composition (polar residues). Residues 934-962 (VNSESGSDSPATSGQKGGGGVSYVSESQC) are disordered.

The protein resides in the synapse. Its function is as follows. Probable GTPase activator for the Rho-type GTPases by converting them to an inactive GDP-bound state. Regulates the localization and assembly of presynaptic components during presynaptic development and is required for specifying the identity of axons during initial polarity acquisition. In these roles it is thought to act cell autonomously downstream of syg-1 and syg-2 and upstream of syd-2, possibly as a positive regulator of the latter. Required for the control of movement, egg-laying and the correct localization of elks-1. The chain is Rho GTPase-activating protein syd-1 from Caenorhabditis briggsae.